The sequence spans 130 residues: Small ribosomal subunit protein uS8A (130 aa).

This sequence belongs to the universal ribosomal protein uS8 family. As to quaternary structure, component of the small ribosomal subunit (SSU). Mature yeast ribosomes consist of a small (40S) and a large (60S) subunit. The 40S small subunit contains 1 molecule of ribosomal RNA (18S rRNA) and at least 33 different proteins. The large 60S subunit contains 3 rRNA molecules (25S, 5.8S and 5S rRNA) and at least 46 different proteins.

It is found in the cytoplasm. The protein resides in the nucleus. Functionally, component of the ribosome, a large ribonucleoprotein complex responsible for the synthesis of proteins in the cell. The small ribosomal subunit (SSU) binds messenger RNAs (mRNAs) and translates the encoded message by selecting cognate aminoacyl-transfer RNA (tRNA) molecules. The large subunit (LSU) contains the ribosomal catalytic site termed the peptidyl transferase center (PTC), which catalyzes the formation of peptide bonds, thereby polymerizing the amino acids delivered by tRNAs into a polypeptide chain. The nascent polypeptides leave the ribosome through a tunnel in the LSU and interact with protein factors that function in enzymatic processing, targeting, and the membrane insertion of nascent chains at the exit of the ribosomal tunnel. This Schizosaccharomyces pombe (strain 972 / ATCC 24843) (Fission yeast) protein is Small ribosomal subunit protein uS8A (rps2201).